A 143-amino-acid polypeptide reads, in one-letter code: Large ribosomal subunit protein uL15 (143 aa).

The tract at residues 1 to 48 (MRLNTISPSKGAKHSSKRLGRGIGSGLGKTSGRGHKGQKARSGCSIHR) is disordered. Over residues 11–20 (GAKHSSKRLG) the composition is skewed to basic residues. Residues 21-31 (RGIGSGLGKTS) show a composition bias toward gly residues.

Belongs to the universal ribosomal protein uL15 family. As to quaternary structure, part of the 50S ribosomal subunit.

In terms of biological role, binds to the 23S rRNA. The chain is Large ribosomal subunit protein uL15 from Baumannia cicadellinicola subsp. Homalodisca coagulata.